A 507-amino-acid chain; its full sequence is WD-40 repeat-containing protein MSI4 (507 aa).

Methionine 1 carries the N-acetylmethionine modification. A disordered region spans residues 1–66 (MESDEAAAVS…KTQQSPSVDE (66 aa)). WD repeat units lie at residues 95–137 (RWGP…KPRV), 162–202 (IHPG…NRHA), and 217–257 (GHQD…TTIG). Residues 258 to 272 (TDSKSSGSIIKQTGE) are compositionally biased toward polar residues. The segment at 258-282 (TDSKSSGSIIKQTGEGTDKNESPTV) is disordered. WD repeat units follow at residues 290-330 (GHED…NPVT), 335-375 (AHDA…ANGV), 384-424 (GHKA…KKSD), and 439-486 (GHRD…YRPE). Positions 308–323 (FCSVGDDSCLILWDAR) match the DWD box motif.

The protein belongs to the WD repeat RBAP46/RBAP48/MSI1 family. Interacts with AHL16 and HOS1. Interacts with LHP1, PDP1, PDP2 and PDP3. Component of the PRC2 (polycomb repressive complex 2) complex which regulates histone methylation on histone H3K27. Expressed in rosette leaves, cauline leaves, main stems and developing fruits. Expressed at higher levels in roots and flowers.

The protein localises to the nucleus. Core histone-binding subunit that may target chromatin assembly factors, chromatin remodeling factors and histone deacetylases to their histone substrates in a manner that is regulated by nucleosomal DNA. Component of the flowering autonomous pathway which positively regulates flowering by promoting transcriptional repression of the flowering repressor FLC. May promote histone deacetylation at the FLC locus leading to the formation of repressive chromatin structures. Forms a histone deacetylase complex with HDA5, HDA6 and FLD that represses FLC gene expression to control flowering time. Also negatively regulates cold-responsive genes. Acts together with PDP1 and MSI5 to regulate the function of the PRC2 complex on FLC. Required for systemic acquired resistance (SAR) toward pathogenic bacteria (e.g. Pseudomonas syringae pv tomato DC3000 (avrPto)). Together with FLD and MSI4/FVE, contributes to dehydroabietinal-dependent (DA, a diterpenoid tricyclic diterpene) activation of flowering ans SAR. The protein is WD-40 repeat-containing protein MSI4 of Arabidopsis thaliana (Mouse-ear cress).